Reading from the N-terminus, the 461-residue chain is MGEMASLRSHKNGIIFILDIVLFFVLLNVLPFEPKANSGLALLAFIAVLWLSEALHVTITALLVPLLAVALGLVSTKQALVGFADPTIFLFFGGFSLATALHIQKLDKLIANKIMALARGNLFIAVIYLFLITAFLSMWMSNTATAAMMLPLAMGILSQLDREKDHNTYVFVLLGIAYSASIGGMGTLVGSPPNAIVASNLNLTFSDWLWYGLPIMIILLPLMIGILYIIFKPKLHLNFEQTFENIEMNPMRILTFIIFPVIALTWIFSGKINPFISGLLGLQKNIASFDSIVALLAAIVICSTGVASWKQIQSNTDWGVLMLFGGGLTLSAVLKDSGASKILADSIVFMIDGQHFYLIGLLVAAFIIFLTEFTSNTASAALLVPIFISIAQSLGMPEIGLALIIGIGASCAFMLPVATPPNAIVFGSGQVKQSEMVKVGFLLNLVCVVVIATMGYMFWLK.

13 consecutive transmembrane segments (helical) span residues 13–33 (GIIF…LPFE), 54–74 (ALHV…LGLV), 81–101 (VGFA…ATAL), 120–140 (GNLF…SMWM), 170–190 (VFVL…TLVG), 211–231 (YGLP…YIIF), 256–276 (FIIF…NPFI), 286–306 (IASF…STGV), 314–334 (SNTD…SAVL), 349–369 (FMID…FIIF), 377–397 (TASA…LGMP), 399–419 (IGLA…PVAT), and 439–459 (VGFL…YMFW).

The protein belongs to the SLC13A/DASS transporter (TC 2.A.47) family. NADC subfamily.

The protein resides in the cell membrane. This is an uncharacterized protein from Haemophilus influenzae (strain ATCC 51907 / DSM 11121 / KW20 / Rd).